A 533-amino-acid chain; its full sequence is Apolipoprotein N-acyltransferase (533 aa).

Transmembrane regions (helical) follow at residues 17–37, 74–94, 105–125, 127–147, 178–198, and 205–225; these read ALLA…FGFF, WLFG…ALLI, LAIL…AVLA, LLWS…GLLE, VIGV…PALL, and VPGI…GYYA. The region spanning 245 to 495 is the CN hydrolase domain; sequence VQPAIDQEAK…QGFVDSTLSG (251 aa). The active-site Proton acceptor is Glu290. Residue Lys354 is part of the active site. Cys407 functions as the Nucleophile in the catalytic mechanism. A helical transmembrane segment spans residues 509–529; that stretch reads YFWLIIGIVGMIAVISRMGFI.

Belongs to the CN hydrolase family. Apolipoprotein N-acyltransferase subfamily.

The protein localises to the cell inner membrane. The catalysed reaction is N-terminal S-1,2-diacyl-sn-glyceryl-L-cysteinyl-[lipoprotein] + a glycerophospholipid = N-acyl-S-1,2-diacyl-sn-glyceryl-L-cysteinyl-[lipoprotein] + a 2-acyl-sn-glycero-3-phospholipid + H(+). Its pathway is protein modification; lipoprotein biosynthesis (N-acyl transfer). Its function is as follows. Catalyzes the phospholipid dependent N-acylation of the N-terminal cysteine of apolipoprotein, the last step in lipoprotein maturation. The sequence is that of Apolipoprotein N-acyltransferase from Rhizobium rhizogenes (strain K84 / ATCC BAA-868) (Agrobacterium radiobacter).